The chain runs to 430 residues: Histidine--tRNA ligase (430 aa).

The protein belongs to the class-II aminoacyl-tRNA synthetase family. As to quaternary structure, homodimer.

It localises to the cytoplasm. It carries out the reaction tRNA(His) + L-histidine + ATP = L-histidyl-tRNA(His) + AMP + diphosphate + H(+). This Anaplasma marginale (strain Florida) protein is Histidine--tRNA ligase.